A 137-amino-acid chain; its full sequence is Acidic phospholipase A2 VP8 (137 aa).

A signal peptide spans 1–16 (MRILWIVAVCLIGVEG). Cystine bridges form between Cys41-Cys130, Cys43-Cys59, Cys58-Cys110, Cys64-Cys137, Cys65-Cys103, Cys72-Cys96, and Cys90-Cys101. Residues Tyr42, Gly44, and Gly46 each contribute to the Ca(2+) site. His62 is a catalytic residue. Asp63 is a binding site for Ca(2+). Asp104 is an active-site residue.

The protein belongs to the phospholipase A2 family. Group II subfamily. D49 sub-subfamily. As to quaternary structure, does not form a complex. Requires Ca(2+) as cofactor. In terms of tissue distribution, expressed by the venom gland.

It localises to the secreted. The enzyme catalyses a 1,2-diacyl-sn-glycero-3-phosphocholine + H2O = a 1-acyl-sn-glycero-3-phosphocholine + a fatty acid + H(+). Its function is as follows. Snake venom phospholipase A2 (PLA2) that is not toxic by itself, but the synergistical mixture of a basic and this acidic protein is lethal. PLA2 catalyzes the calcium-dependent hydrolysis of the 2-acyl groups in 3-sn-phosphoglycerides. The polypeptide is Acidic phospholipase A2 VP8 (Daboia palaestinae (Palestine viper)).